Consider the following 91-residue polypeptide: Em-like protein (91 aa).

Composition is skewed to basic and acidic residues over residues 1–18 (MEQQ…REGE) and 31–51 (DAQE…KEQI). The disordered stretch occupies residues 1-91 (MEQQQDRREL…PIDESKYRHP (91 aa)). Over residues 62-73 (KGGLSSAGGPGG) the composition is skewed to gly residues. Over residues 75–91 (RASEEGRPIDESKYRHP) the composition is skewed to basic and acidic residues.

The protein belongs to the small hydrophilic plant seed protein family.

The sequence is that of Em-like protein from Picea glauca (White spruce).